The primary structure comprises 109 residues: Prothymosin alpha (109 aa).

The segment at Met-1–Asp-109 is disordered. Residues Ser-9–Pro-35 show a composition bias toward basic and acidic residues. The span at Glu-41–Asp-81 shows a compositional bias: acidic residues. The span at Asp-99–Asp-109 shows a compositional bias: basic and acidic residues.

This sequence belongs to the pro/parathymosin family. In terms of tissue distribution, highly expressed in the testis.

It localises to the nucleus. In terms of biological role, may have role in testicular activity. The sequence is that of Prothymosin alpha from Pelophylax lessonae (Pool frog).